The following is a 277-amino-acid chain: MEMO1 family protein TRQ2_0860 (277 aa).

Belongs to the MEMO1 family.

This chain is MEMO1 family protein TRQ2_0860, found in Thermotoga sp. (strain RQ2).